Here is a 162-residue protein sequence, read N- to C-terminus: NADH-quinone oxidoreductase subunit I (162 aa).

2 4Fe-4S ferredoxin-type domains span residues 54–83 (RRYE…IESE) and 93–122 (TRYD…ETQI). [4Fe-4S] cluster is bound by residues cysteine 63, cysteine 66, cysteine 69, cysteine 73, cysteine 102, cysteine 105, cysteine 108, and cysteine 112.

Belongs to the complex I 23 kDa subunit family. In terms of assembly, NDH-1 is composed of 14 different subunits. Subunits NuoA, H, J, K, L, M, N constitute the membrane sector of the complex. The cofactor is [4Fe-4S] cluster.

It is found in the cell inner membrane. It carries out the reaction a quinone + NADH + 5 H(+)(in) = a quinol + NAD(+) + 4 H(+)(out). NDH-1 shuttles electrons from NADH, via FMN and iron-sulfur (Fe-S) centers, to quinones in the respiratory chain. The immediate electron acceptor for the enzyme in this species is believed to be ubiquinone. Couples the redox reaction to proton translocation (for every two electrons transferred, four hydrogen ions are translocated across the cytoplasmic membrane), and thus conserves the redox energy in a proton gradient. The chain is NADH-quinone oxidoreductase subunit I from Burkholderia mallei (strain NCTC 10247).